The chain runs to 186 residues: Putative manganese efflux pump MntP (186 aa).

Transmembrane regions (helical) follow at residues 5–25, 41–61, 72–92, 107–127, 135–155, and 166–186; these read VLIG…MDAF, VFQI…GGMI, ALAG…MIVA, FGLF…GLSL, ILTI…GLLL, and YSEA…LLPI.

Belongs to the MntP (TC 9.B.29) family.

It is found in the cell membrane. Its function is as follows. Probably functions as a manganese efflux pump. The protein is Putative manganese efflux pump MntP of Bacillus licheniformis (strain ATCC 14580 / DSM 13 / JCM 2505 / CCUG 7422 / NBRC 12200 / NCIMB 9375 / NCTC 10341 / NRRL NRS-1264 / Gibson 46).